The sequence spans 87 residues: Xibalbin-2 (87 aa).

The N-terminal stretch at 1–25 is a signal peptide; it reads MKGVCTRKVLYFFMAVILFVAIVAS. Positions 26-45 are excised as a propeptide; sequence EDTENRNPAMAMPLQRMEQE.

The protein belongs to the xibalbin-2 family. Post-translationally, contains 5 disulfide bonds. As to expression, expressed by the venom gland. Not found in the whole body.

Its subcellular location is the secreted. In terms of biological role, probable neurotoxin. Moderately inhibits voltage-gated potassium channels (Kv1.1/KCNA1, Kv1.2/KCNA2, Kv1.3/KCNA3, and Kv1.6/KCNA6, with the highest toxicity against Kv1.6 (73.2% inhibition at 1 uM)) and weakly inhibits sodium channels (Nav1.4/SCN4A). Does not activate protein kinase A type II (PKA-II) and MAP kinase Erk1/2 in sensory neurons. Does not show cytotoxic activity. Does not have an impact on Ca2+, cAMP, and NO signaling in the cell types analyzed. Does not interfere with the adhesion of leukocytes to endothelial cells. Moderately inhibits voltage-gated potassium channels (Kv1.1/KCNA1, Kv1.2/KCNA2, Kv1.3/KCNA3, and Kv1.6/KCNA6, with the highest toxicity against Kv1.6 (75.9% inhibition at 1 uM)). Does not activate protein kinase A type II (PKA-II) and MAP kinase Erk1/2 in sensory neurons. Does not show cytotoxic activity. Does not have an impact on Ca2+, cAMP, and NO signaling in the cell types analyzed. Does not interfere with the adhesion of leukocytes to endothelial cells. The protein is Xibalbin-2 of Xibalbanus tulumensis (Blind cave remipede).